Reading from the N-terminus, the 227-residue chain is [D-Ala2]-deltorphins (227 aa).

The signal sequence occupies residues 1–20 (MSFLKKSLLLVLFLGLVSHS). Positions 21 to 46 (VCKEEKRETEEENENEEENHEVGSEM) are excised as a propeptide. The tract at residues 22-227 (CKEEKRETEE…DVVGGEAKKM (206 aa)) is disordered. Residues 30 to 39 (EEENENEEEN) show a composition bias toward acidic residues. Ala50 carries the D-alanine (Ala) modification. A propeptide spanning residues 57-75 (DTEEKNENEEENQEEGSEM) is cleaved from the precursor. Residues 62–72 (NENEEENQEEG) show a composition bias toward acidic residues. A compositionally biased stretch (basic and acidic residues) spans 73–87 (SEMKRYAFGYPKREP). D-alanine (Ala) is present on Ala79. A propeptide spanning residues 86–104 (EPEEENENEEENHEEGSEM) is cleaved from the precursor. Over residues 88–98 (EEENENEEENH) the composition is skewed to acidic residues. Basic and acidic residues predominate over residues 99–108 (EEGSEMKRYA). At Ala108 the chain carries D-alanine (Ala). Gly113 carries the post-translational modification Glycine amide. Positions 115 to 140 (EAKKMKREPEEENENEEENHEEGSEM) are excised as a propeptide. Acidic residues predominate over residues 124–134 (EEENENEEENH). The segment covering 135–144 (EEGSEMKRYA) has biased composition (basic and acidic residues). At Ala144 the chain carries D-alanine (Ala). Residue Gly149 is modified to Glycine amide. Residues 151–176 (EAKKMKREPEEENENEEENHEEGSEM) constitute a propeptide that is removed on maturation. Residues 160–170 (EEENENEEENH) are compositionally biased toward acidic residues. The span at 171 to 180 (EEGSEMKRYA) shows a compositional bias: basic and acidic residues. Ala180 carries the post-translational modification D-alanine (Ala). The residue at position 185 (Gly185) is a Glycine amide. The propeptide occupies 187–212 (EAKKMKREPEEENENEEENHEEGSEM). Over residues 196-206 (EEENENEEENH) the composition is skewed to acidic residues. A compositionally biased stretch (basic and acidic residues) spans 207–216 (EEGSEMKRYA). A D-alanine (Ala) modification is found at Ala216. Gly221 is modified (glycine amide). Positions 223 to 227 (EAKKM) are excised as a propeptide.

The protein belongs to the frog skin active peptide (FSAP) family. Dermorphin subfamily. As to expression, expressed by the skin glands.

It localises to the secreted. Its function is as follows. Deltorphin is a heptapeptide with a very potent opiate-like activity. Has high affinity and selectivity for delta-type opioid receptors. The two dermorphin-like peptides have a similar affinity and selectivity for the mu opioid receptor as dermorphin. In Phyllomedusa bicolor (Two-colored leaf frog), this protein is [D-Ala2]-deltorphins.